The sequence spans 374 residues: RNA polymerase sigma factor SigA (374 aa).

The segment at 141-211 (LAEANLRLVV…TRAIADQART (71 aa)) is sigma-70 factor domain-2. The short motif at 165 to 168 (DLIQ) is the Interaction with polymerase core subunit RpoC element. The interval 220-296 (ETINKLIRVQ…DQDATSPSDH (77 aa)) is sigma-70 factor domain-3. Positions 309-362 (VLDTLTDREENVLRLRFGLDDGRTRTLEEVGRVFGVTRERIRQIEAKALRKLRH) are sigma-70 factor domain-4. Residues 335–354 (LEEVGRVFGVTRERIRQIEA) constitute a DNA-binding region (H-T-H motif).

This sequence belongs to the sigma-70 factor family. RpoD/SigA subfamily. In terms of assembly, interacts transiently with the RNA polymerase catalytic core.

It localises to the cytoplasm. Sigma factors are initiation factors that promote the attachment of RNA polymerase to specific initiation sites and are then released. This sigma factor is the primary sigma factor during exponential growth. This Listeria innocua serovar 6a (strain ATCC BAA-680 / CLIP 11262) protein is RNA polymerase sigma factor SigA.